The chain runs to 410 residues: Beta-arrestin-2 (410 aa).

Y48 is modified (phosphotyrosine). Hydroxyproline; by PHD2 occurs at positions 176 and 181. An interaction with TRAF6 region spans residues 241 to 410; it reads ADICLFSTAQ…KDDDCDDQFC (170 aa). At S361 the chain carries Phosphoserine. The tract at residues 364–410 is interaction with AP2B1; it reads RETDVPVDTNLIEFDTNYATDDDIVFEDFARLRLKGMKDDDCDDQFC. A Phosphothreonine modification is found at T383. Residues 386–396 carry the [DE]-X(1,2)-F-X-X-[FL]-X-X-X-R motif motif; it reads DIVFEDFARLR.

This sequence belongs to the arrestin family. In terms of assembly, homooligomer; the self-association is mediated by InsP6-binding. Heterooligomer with ARRB1; the association is mediated by InsP6-binding. Interacts with ADRB2 and CHRM2. Interacts with PDE4A. Interacts with PDE4D. Interacts with MAPK10, MAPK1 and MAPK3. Interacts with DRD2. Interacts with FSHR. Interacts with CLTC. Interacts with HTR2C. Interacts with CCR5. Interacts with CXCR4. Interacts with SRC. Interacts with DUSP16; the interaction is interrupted by stimulation of AGTR1 and activation of MAPK10. Interacts with CHUK; the interaction is enhanced stimulation of ADRB2. Interacts with RELA. Interacts with MDM2; the interaction is enhanced by activation of GPCRs. Interacts with SLC9A5. Interacts with TRAF6. Interacts with IGF1R. Interacts with ENG. Interacts with ARRB2. Interacts with KIR2DL1, KIR2DL3 and KIR2DL4. Interacts with LDLR. Interacts with AP2B1. Interacts with C5AR1. Interacts with RAF1. Interacts with MAP2K1. Interacts with MAPK1. Interacts with MAPK10; the interaction enhances MAPK10 activation by MAP3K5. Interacts with MAP2K4; the interaction is enhanced by presence of MAP3K5 and MAPK10. Interacts with MAP3K5. Interacts with AKT1. Interacts with IKBKB and MAP3K14. Interacts with SMO (activated). Interacts with GSK3A and GSK3B. Interacts with CXCR4; the interaction is dependent on C-terminal phosphorylation of CXCR4 and allows activation of MAPK1 and MAPK3. Interacts with GPR143. Interacts with HCK and CXCR1 (phosphorylated). Associates with protein phosphatase 2A (PP2A). Interacts with ACKR3 and ACKR4. Interacts with ARRDC1; the interaction is direct. Interacts with GPR61, GPR62 and GPR135. Interacts (via NACHT and LRR domains) with NLRP3; this interaction is direct and inducible by omega-3 polyunsaturated fatty acids (PUFAs). Interacts with FFAR4 (via C-terminus); this interaction is stimulated by long-chain fatty acids (LCFAs). Interacts with GPR35. Interacts with GPR84. Interacts with TIGIT; this interaction inhibits the NF-kappa-B pathway. Interacts with TGFBR3. Post-translationally, phosphorylated at Thr-383 in the cytoplasm; probably dephosphorylated at the plasma membrane. The phosphorylation does not regulate internalization and recycling of ADRB2, interaction with clathrin or AP2B1. In terms of processing, the ubiquitination status appears to regulate the formation and trafficking of beta-arrestin-GPCR complexes and signaling. Ubiquitination appears to occur GPCR-specific. Ubiquitinated by MDM2; the ubiquitination is required for rapid internalization of ADRB2. Deubiquitinated by USP33; the deubiquitination leads to a dissociation of the beta-arrestin-GPCR complex. Stimulation of a class A GPCR, such as ADRB2, induces transient ubiquitination and subsequently promotes association with USP33. Stimulation of a class B GPCR promotes a sustained ubiquitination. Deubiquitinated by USP20; allowing USP20 to deubiquitinate TRAF6 leading to inhibition of NF-kappa-B signaling. Hydroxylation by PHD2 modulates the rate of internalization by slowing down recruitment to the plasma membrane and inhibiting subsequent co-internalization with class A receptors. As to expression, predominantly localized in neuronal tissues and in the spleen.

It is found in the cytoplasm. The protein resides in the nucleus. It localises to the cell membrane. The protein localises to the membrane. Its subcellular location is the clathrin-coated pit. It is found in the cytoplasmic vesicle. Functionally, functions in regulating agonist-mediated G-protein coupled receptor (GPCR) signaling by mediating both receptor desensitization and resensitization processes. During homologous desensitization, beta-arrestins bind to the GPRK-phosphorylated receptor and sterically preclude its coupling to the cognate G-protein; the binding appears to require additional receptor determinants exposed only in the active receptor conformation. The beta-arrestins target many receptors for internalization by acting as endocytic adapters (CLASPs, clathrin-associated sorting proteins) and recruiting the GPRCs to the adapter protein 2 complex 2 (AP-2) in clathrin-coated pits (CCPs). However, the extent of beta-arrestin involvement appears to vary significantly depending on the receptor, agonist and cell type. Internalized arrestin-receptor complexes traffic to intracellular endosomes, where they remain uncoupled from G-proteins. Two different modes of arrestin-mediated internalization occur. Class A receptors, like ADRB2, OPRM1, ENDRA, D1AR and ADRA1B dissociate from beta-arrestin at or near the plasma membrane and undergo rapid recycling. Class B receptors, like AVPR2, AGTR1, NTSR1, TRHR and TACR1 internalize as a complex with arrestin and traffic with it to endosomal vesicles, presumably as desensitized receptors, for extended periods of time. Receptor resensitization then requires that receptor-bound arrestin is removed so that the receptor can be dephosphorylated and returned to the plasma membrane. Mediates endocytosis of CCR7 following ligation of CCL19 but not CCL21. Involved in internalization of P2RY1, P2RY4, P2RY6 and P2RY11 and ATP-stimulated internalization of P2RY2. Involved in phosphorylation-dependent internalization of OPRD1 and subsequent recycling or degradation. Involved in ubiquitination of IGF1R. Beta-arrestins function as multivalent adapter proteins that can switch the GPCR from a G-protein signaling mode that transmits short-lived signals from the plasma membrane via small molecule second messengers and ion channels to a beta-arrestin signaling mode that transmits a distinct set of signals that are initiated as the receptor internalizes and transits the intracellular compartment. Acts as a signaling scaffold for MAPK pathways such as MAPK1/3 (ERK1/2) and MAPK10 (JNK3). ERK1/2 and JNK3 activated by the beta-arrestin scaffold are largely excluded from the nucleus and confined to cytoplasmic locations such as endocytic vesicles, also called beta-arrestin signalosomes. Acts as a signaling scaffold for the AKT1 pathway. GPCRs for which the beta-arrestin-mediated signaling relies on both ARRB1 and ARRB2 (codependent regulation) include ADRB2, F2RL1 and PTH1R. For some GPCRs the beta-arrestin-mediated signaling relies on either ARRB1 or ARRB2 and is inhibited by the other respective beta-arrestin form (reciprocal regulation). Increases ERK1/2 signaling in AGTR1- and AVPR2-mediated activation (reciprocal regulation). Involved in CCR7-mediated ERK1/2 signaling involving ligand CCL19. Is involved in type-1A angiotensin II receptor/AGTR1-mediated ERK activity. Is involved in type-1A angiotensin II receptor/AGTR1-mediated MAPK10 activity. Is involved in dopamine-stimulated AKT1 activity in the striatum by disrupting the association of AKT1 with its negative regulator PP2A. Involved in AGTR1-mediated chemotaxis. Appears to function as signaling scaffold involved in regulation of MIP-1-beta-stimulated CCR5-dependent chemotaxis. Involved in attenuation of NF-kappa-B-dependent transcription in response to GPCR or cytokine stimulation by interacting with and stabilizing CHUK. Suppresses UV-induced NF-kappa-B-dependent activation by interacting with CHUK. The function is promoted by stimulation of ADRB2 and dephosphorylation of ARRB2. Involved in IL8-mediated granule release in neutrophils. Involved in p53/TP53-mediated apoptosis by regulating MDM2 and reducing the MDM2-mediated degradation of p53/TP53. May serve as nuclear messenger for GPCRs. Upon stimulation of OR1D2, may be involved in regulation of gene expression during the early processes of fertilization. Also involved in regulation of receptors other than GPCRs. Involved in endocytosis of TGFBR2 and TGFBR3 and down-regulates TGF-beta signaling such as NF-kappa-B activation. Involved in endocytosis of low-density lipoprotein receptor/LDLR. Involved in endocytosis of smoothened homolog/Smo, which also requires GRK2. Involved in endocytosis of SLC9A5. Involved in endocytosis of ENG and subsequent TGF-beta-mediated ERK activation and migration of epithelial cells. Involved in Toll-like receptor and IL-1 receptor signaling through the interaction with TRAF6 which prevents TRAF6 autoubiquitination and oligomerization required for activation of NF-kappa-B and JUN. Involved in insulin resistance by acting as insulin-induced signaling scaffold for SRC, AKT1 and INSR. Involved in regulation of inhibitory signaling of natural killer cells by recruiting PTPN6 and PTPN11 to KIR2DL1. Involved in the internalization of the atypical chemokine receptor ACKR3. Acts as an adapter protein coupling FFAR4 receptor to specific downstream signaling pathways, as well as mediating receptor endocytosis. During the activation step of NLRP3 inflammasome, directly associates with NLRP3 leading to inhibition of pro-inflammatory cytokine release and inhibition of inflammation. This chain is Beta-arrestin-2 (Arrb2), found in Mus musculus (Mouse).